An 862-amino-acid chain; its full sequence is S-layer protein EA1 (862 aa).

Positions 1–29 are cleaved as a signal peptide; it reads MAKTNSYKKVIAGTMTAAMVAGIVSPVAA. 3 consecutive SLH domains span residues 30–93, 94–151, and 152–214; these read AGKS…NAQP, SFKD…KVNG, and ELVT…DNAQ.

It localises to the secreted. The protein resides in the cell wall. The protein localises to the S-layer. In terms of biological role, the S-layer is a paracrystalline mono-layered assembly of proteins which coat the surface of bacteria. This is S-layer protein EA1 (eag) from Bacillus anthracis.